Reading from the N-terminus, the 169-residue chain is Peptide deformylase 1 (169 aa).

The Fe cation site is built by Cys93 and His135. Glu136 is an active-site residue. His139 contributes to the Fe cation binding site.

The protein belongs to the polypeptide deformylase family. Fe(2+) serves as cofactor.

It carries out the reaction N-terminal N-formyl-L-methionyl-[peptide] + H2O = N-terminal L-methionyl-[peptide] + formate. Its function is as follows. Removes the formyl group from the N-terminal Met of newly synthesized proteins. Requires at least a dipeptide for an efficient rate of reaction. N-terminal L-methionine is a prerequisite for activity but the enzyme has broad specificity at other positions. In Corynebacterium efficiens (strain DSM 44549 / YS-314 / AJ 12310 / JCM 11189 / NBRC 100395), this protein is Peptide deformylase 1.